Reading from the N-terminus, the 213-residue chain is Adenylate kinase (213 aa).

An ATP-binding site is contributed by 10–15; that stretch reads GSGKGT. The interval 30-59 is NMP; it reads SVGDLLRNIISSSSELGKKIKGTVESGNLI. AMP is bound by residues Arg-36, 57–59, 83–86, and Gln-90; these read NLI and GFPR. The interval 125 to 160 is LID; the sequence is NRLACLDCKNIYSVSSFKSTTCAKCKSTRLEKRIDD. Residue Arg-126 coordinates ATP. Residues Cys-129 and Cys-132 each coordinate Zn(2+). 135–136 is an ATP binding site; it reads IY. Zn(2+) contacts are provided by Cys-146 and Cys-149. 2 residues coordinate AMP: Arg-157 and Arg-169. ATP is bound at residue Leu-195.

This sequence belongs to the adenylate kinase family. Monomer.

The protein resides in the cytoplasm. It catalyses the reaction AMP + ATP = 2 ADP. The protein operates within purine metabolism; AMP biosynthesis via salvage pathway; AMP from ADP: step 1/1. In terms of biological role, catalyzes the reversible transfer of the terminal phosphate group between ATP and AMP. Plays an important role in cellular energy homeostasis and in adenine nucleotide metabolism. The polypeptide is Adenylate kinase (Wolbachia pipientis wMel).